We begin with the raw amino-acid sequence, 426 residues long: Serine hydroxymethyltransferase (426 aa).

(6S)-5,6,7,8-tetrahydrofolate-binding positions include leucine 111 and 115-117; that span reads GHL. Lysine 220 bears the N6-(pyridoxal phosphate)lysine mark.

It belongs to the SHMT family. As to quaternary structure, homodimer. It depends on pyridoxal 5'-phosphate as a cofactor.

Its subcellular location is the cytoplasm. It carries out the reaction (6R)-5,10-methylene-5,6,7,8-tetrahydrofolate + glycine + H2O = (6S)-5,6,7,8-tetrahydrofolate + L-serine. The protein operates within one-carbon metabolism; tetrahydrofolate interconversion. Its pathway is amino-acid biosynthesis; glycine biosynthesis; glycine from L-serine: step 1/1. In terms of biological role, catalyzes the reversible interconversion of serine and glycine with tetrahydrofolate (THF) serving as the one-carbon carrier. This reaction serves as the major source of one-carbon groups required for the biosynthesis of purines, thymidylate, methionine, and other important biomolecules. Also exhibits THF-independent aldolase activity toward beta-hydroxyamino acids, producing glycine and aldehydes, via a retro-aldol mechanism. This Orientia tsutsugamushi (strain Ikeda) (Rickettsia tsutsugamushi) protein is Serine hydroxymethyltransferase.